A 293-amino-acid polypeptide reads, in one-letter code: DNA repair protein RecO (293 aa).

It belongs to the RecO family.

Involved in DNA repair and RecF pathway recombination. This chain is DNA repair protein RecO, found in Acaryochloris marina (strain MBIC 11017).